A 219-amino-acid polypeptide reads, in one-letter code: MAMKLYGDEMSACVARVLLCLHEKNTEFELVPVNLFACHHKLPSFLSMNPFGKVPALQDDDLTLFESRAITAYIAEKHRDKGTDLTRHEDPKEAAIVKLWSEVEAHHFNPAISAVIHQLIVVPLQGESPNAAIVEENLENLGKILDVYEERLGKTKYLAGDTYTLADLHHVPYTYYFMKTIHAGLINDRPNVKAWWEDLCSRPAFLKVSPGLTVAPTTN.

One can recognise a GST N-terminal domain in the interval 2–82; the sequence is AMKLYGDEMS…YIAEKHRDKG (81 aa). Glutathione contacts are provided by residues 11 to 12, 40 to 41, 53 to 54, and 66 to 67; these read SA, HK, KV, and ES. The region spanning 90–217 is the GST C-terminal domain; it reads DPKEAAIVKL…VSPGLTVAPT (128 aa).

Belongs to the GST superfamily. Phi family.

It is found in the cytoplasm. Its subcellular location is the cytosol. The catalysed reaction is RX + glutathione = an S-substituted glutathione + a halide anion + H(+). Its function is as follows. May be involved in the conjugation of reduced glutathione to a wide number of exogenous and endogenous hydrophobic electrophiles and have a detoxification role against certain herbicides. The sequence is that of Glutathione S-transferase F13 (GSTF13) from Arabidopsis thaliana (Mouse-ear cress).